We begin with the raw amino-acid sequence, 321 residues long: Olfactory receptor 3A3 (321 aa).

Topologically, residues Met1–Pro34 are extracellular. Asn14 is a glycosylation site (N-linked (GlcNAc...) asparagine). A helical membrane pass occupies residues Val35–Val58. The Cytoplasmic segment spans residues Leu59–Ala66. Residues Pro67–Pro88 traverse the membrane as a helical segment. Residues Ala89–Gln109 are Extracellular-facing. A disulfide bridge links Cys106 with Cys198. Residues Leu110–Tyr129 traverse the membrane as a helical segment. Topologically, residues Asp130 to Val149 are cytoplasmic. A helical transmembrane segment spans residues Gln150 to Thr167. Residues His168–Glu205 are Extracellular-facing. Residues Leu206–Ala228 form a helical membrane-spanning segment. The Cytoplasmic portion of the chain corresponds to His229 to Lys245. Residues Ala246–Tyr268 form a helical membrane-spanning segment. The Extracellular portion of the chain corresponds to Met269–Lys281. A helical membrane pass occupies residues Gly282–Leu301. Residues Arg302–Thr321 lie on the Cytoplasmic side of the membrane.

This sequence belongs to the G-protein coupled receptor 1 family.

Its subcellular location is the cell membrane. In terms of biological role, odorant receptor. The chain is Olfactory receptor 3A3 (OR3A3) from Homo sapiens (Human).